A 65-amino-acid polypeptide reads, in one-letter code: Prokaryotic ubiquitin-like protein Pup (65 aa).

Residues 1 to 14 show a composition bias toward basic and acidic residues; the sequence is MSGHEQQRPSRREE. The disordered stretch occupies residues 1-35; that stretch reads MSGHEQQRPSRREEDVEETPVVPAQAGAQAKESDA. The tract at residues 21–59 is ARC ATPase binding; sequence VVPAQAGAQAKESDADVDALLDEIDEVLESNSEEFVRGF. Residues 26–49 adopt a coiled-coil conformation; the sequence is AGAQAKESDADVDALLDEIDEVLE. Deamidated glutamine is present on Q65. Residue Q65 forms an Isoglutamyl lysine isopeptide (Gln-Lys) (interchain with K-? in acceptor proteins) linkage.

Belongs to the prokaryotic ubiquitin-like protein family. As to quaternary structure, strongly interacts with the proteasome-associated ATPase ARC through a hydrophobic interface; the interacting region of Pup lies in its C-terminal half. There is one Pup binding site per ARC hexamer ring. Is modified by deamidation of its C-terminal glutamine to glutamate by the deamidase Dop, a prerequisite to the subsequent pupylation process.

It functions in the pathway protein degradation; proteasomal Pup-dependent pathway. In terms of biological role, protein modifier that is covalently attached to lysine residues of substrate proteins, thereby targeting them for proteasomal degradation. The tagging system is termed pupylation. This Kineococcus radiotolerans (strain ATCC BAA-149 / DSM 14245 / SRS30216) protein is Prokaryotic ubiquitin-like protein Pup.